The sequence spans 158 residues: GTP-dependent dephospho-CoA kinase (158 aa).

The GTP site is built by Asp-35, Val-36, Asp-54, Lys-56, Glu-109, and Asp-132.

The protein belongs to the GTP-dependent DPCK family.

It carries out the reaction 3'-dephospho-CoA + GTP = GDP + CoA + H(+). It functions in the pathway cofactor biosynthesis; coenzyme A biosynthesis. In terms of biological role, catalyzes the GTP-dependent phosphorylation of the 3'-hydroxyl group of dephosphocoenzyme A to form coenzyme A (CoA). This Methanococcus maripaludis (strain C5 / ATCC BAA-1333) protein is GTP-dependent dephospho-CoA kinase.